A 483-amino-acid polypeptide reads, in one-letter code: Zinc metalloproteinase/disintegrin (483 aa).

A signal peptide spans 1-20 (MIQVLLVTLCLAAFPYQGSS). Residues 21–190 (IILESGNVND…KKASQLNLTP (170 aa)) constitute a propeptide that is removed on maturation. Residues 198 to 394 (RYIELVVVAD…HNPQCMLNEP (197 aa)) form the Peptidase M12B domain. Ca(2+)-binding residues include glutamate 201 and aspartate 285. Intrachain disulfides connect cysteine 309–cysteine 389, cysteine 349–cysteine 373, and cysteine 351–cysteine 356. Histidine 334 contacts Zn(2+). Glutamate 335 is an active-site residue. Positions 338 and 344 each coordinate Zn(2+). Residues cysteine 389 and asparagine 392 each contribute to the Ca(2+) site. The propeptide occupies 395–418 (LRTDIVSTPVSGNELLETGEESDF). A Disintegrin domain is found at 402–483 (TPVSGNELLE…AGCPRNPFHA (82 aa)). 4 disulfides stabilise this stretch: cysteine 425-cysteine 448, cysteine 439-cysteine 445, cysteine 444-cysteine 469, and cysteine 457-cysteine 476. Residues 461–463 (RGD) carry the Cell attachment site motif.

It belongs to the venom metalloproteinase (M12B) family. P-II subfamily. P-IId sub-subfamily. In terms of assembly, homodimer; disulfide-linked (disintegrin). The cofactor is Zn(2+). Expressed by the venom gland.

Its subcellular location is the secreted. In terms of biological role, impairs hemostasis in the envenomed animal. This protein has not been identified in the venom. Functionally, inhibits ADP-induced platelet aggregation. Binds and inhibits integrins GPIIb/GPIIIa (ITGA2B/ITGB3), alpha-5/beta-1 (ITGA5/ITGB1), alpha-V/beta-3 (ITGAV/ITGB3), and alpha-V/beta-5 (ITGAV/ITGB5). It blocks cancer cell adhesion (tested on human breast cancer cell line MDA-MB-435) to fibronectin and vitronectin and thus prevents invasion of cancer cells. This is Zinc metalloproteinase/disintegrin from Agkistrodon contortrix contortrix (Southern copperhead).